Here is a 1468-residue protein sequence, read N- to C-terminus: Potassium channel K2 (1468 aa).

A run of 6 helical transmembrane segments spans residues 48–68 (MIYI…YWIY), 146–165 (FNCY…WYIS), 185–209 (IYIY…IISY), 221–240 (LLID…RHFF), 246–264 (IDIY…FLNV), and 285–306 (IILG…IQGI). Residues 326–344 (YFYFSIISISTVGYGDIIP) constitute an intramembrane region (pore-forming). The chain crosses the membrane as a helical span at residues 351–368 (VICIFFIFWTFIWVPIQF). The segment at 804–823 (TCARTNESHKNNRLRSRRSQ) is disordered. The segment covering 814 to 823 (NNRLRSRRSQ) has biased composition (basic residues). Positions 1141 to 1185 (KSNKNSNNNNKCEQIKQLNNNLTFKKNEKKTKSNKQNTNDTLERR) form a coiled coil.

The protein localises to the membrane. Its function is as follows. May be involved in transmembrane potassium transport at the subcellular level not affecting bulk potassium transport across the plasma membrane. The chain is Potassium channel K2 from Plasmodium berghei (strain Anka).